The sequence spans 300 residues: Probable endonuclease 4 (300 aa).

9 residues coordinate Zn(2+): H69, H110, E145, D179, H182, H214, D227, H229, and E259.

Belongs to the AP endonuclease 2 family. Zn(2+) serves as cofactor.

The catalysed reaction is Endonucleolytic cleavage to 5'-phosphooligonucleotide end-products.. Endonuclease IV plays a role in DNA repair. It cleaves phosphodiester bonds at apurinic or apyrimidinic (AP) sites, generating a 3'-hydroxyl group and a 5'-terminal sugar phosphate. This Lachnoclostridium phytofermentans (strain ATCC 700394 / DSM 18823 / ISDg) (Clostridium phytofermentans) protein is Probable endonuclease 4.